A 465-amino-acid polypeptide reads, in one-letter code: Adenosylhomocysteinase (465 aa).

Substrate is bound by residues T56, D131, and E191. Residue 192 to 194 (TTT) coordinates NAD(+). Substrate is bound by residues K221 and D225. Residues N226, 255 to 260 (GYGDVG), E278, N313, 334 to 336 (IGH), and N379 each bind NAD(+).

This sequence belongs to the adenosylhomocysteinase family. NAD(+) serves as cofactor.

The protein resides in the cytoplasm. It carries out the reaction S-adenosyl-L-homocysteine + H2O = L-homocysteine + adenosine. It participates in amino-acid biosynthesis; L-homocysteine biosynthesis; L-homocysteine from S-adenosyl-L-homocysteine: step 1/1. May play a key role in the regulation of the intracellular concentration of adenosylhomocysteine. This chain is Adenosylhomocysteinase, found in Bartonella tribocorum (strain CIP 105476 / IBS 506).